Consider the following 66-residue polypeptide: Large ribosomal subunit protein uL29 (66 aa).

It belongs to the universal ribosomal protein uL29 family.

In Rhizobium meliloti (strain 1021) (Ensifer meliloti), this protein is Large ribosomal subunit protein uL29.